Consider the following 1067-residue polypeptide: Isoleucine--tRNA ligase (1067 aa).

Residues 49 to 59 carry the 'HIGH' region motif; sequence PYVSGAIHLGT. A 'KMSKS' region motif is present at residues 625 to 629; it reads KMSKS. Lys-628 is an ATP binding site.

Belongs to the class-I aminoacyl-tRNA synthetase family. IleS type 2 subfamily. Monomer. The cofactor is Zn(2+).

The protein localises to the cytoplasm. The enzyme catalyses tRNA(Ile) + L-isoleucine + ATP = L-isoleucyl-tRNA(Ile) + AMP + diphosphate. Functionally, catalyzes the attachment of isoleucine to tRNA(Ile). As IleRS can inadvertently accommodate and process structurally similar amino acids such as valine, to avoid such errors it has two additional distinct tRNA(Ile)-dependent editing activities. One activity is designated as 'pretransfer' editing and involves the hydrolysis of activated Val-AMP. The other activity is designated 'posttransfer' editing and involves deacylation of mischarged Val-tRNA(Ile). The polypeptide is Isoleucine--tRNA ligase (Pyrococcus abyssi (strain GE5 / Orsay)).